A 248-amino-acid polypeptide reads, in one-letter code: DNA repair protein RecO (248 aa).

This sequence belongs to the RecO family.

Involved in DNA repair and RecF pathway recombination. The protein is DNA repair protein RecO of Streptomyces griseus subsp. griseus (strain JCM 4626 / CBS 651.72 / NBRC 13350 / KCC S-0626 / ISP 5235).